Reading from the N-terminus, the 203-residue chain is Endo-type membrane-bound lytic murein transglycosylase A (203 aa).

Residues 1–15 (MKLRWLLILVVFLAG) form the signal peptide. A lipid anchor (N-palmitoyl cysteine) is attached at Cys-16. Cys-16 is lipidated: S-diacylglycerol cysteine.

Belongs to the transglycosylase Slt family.

It localises to the cell outer membrane. The catalysed reaction is Endolytic cleavage of the (1-&gt;4)-beta-glycosidic linkage between N-acetylmuramic acid (MurNAc) and N-acetylglucosamine (GlcNAc) residues in peptidoglycan with concomitant formation of a 1,6-anhydrobond in the MurNAc residue.. In terms of biological role, murein-degrading enzyme. May play a role in recycling of muropeptides during cell elongation and/or cell division. Preferentially cleaves at a distance of more than two disaccharide units from the ends of the glycan chain. The chain is Endo-type membrane-bound lytic murein transglycosylase A from Klebsiella pneumoniae (strain 342).